Here is a 634-residue protein sequence, read N- to C-terminus: RING finger protein 207 (634 aa).

The RING-type zinc-finger motif lies at 25–63 (CHLCQEQYEHPCLLDCYHTFCASCLRGRVADSRLTCPVC). A B box-type; atypical zinc finger spans residues 93-145 (EETVQCANCDLECKKQDVDAMYYCNTCCQPLCRDCRETTHKAKMFSRHEIVSL). Cys-98, Cys-101, Cys-127, and His-132 together coordinate Zn(2+). The segment at 575–634 (YEDSTSTADTQPSNELSCNTEDNWTLNSLSEETNPKNKDYYRTNKQKNTTDSTNRKEIPM) is disordered. The span at 577-606 (DSTSTADTQPSNELSCNTEDNWTLNSLSEE) shows a compositional bias: polar residues. Residues 607–616 (TNPKNKDYYR) are compositionally biased toward basic and acidic residues.

The protein localises to the cytoplasm. In terms of biological role, plays a role in cardiac repolarization possibly by stabilizing membrane expression of the potassium channel kcnh6a/zerg, or by assisting its synthesis, folding or export from the endoplasmic reticulum, in a heat shock protein-dependent manner. This is RING finger protein 207 (rnf207b) from Danio rerio (Zebrafish).